Here is a 192-residue protein sequence, read N- to C-terminus: Pyridoxal 5'-phosphate synthase subunit PdxT (192 aa).

Residue 46–48 coordinates L-glutamine; the sequence is GES. The Nucleophile role is filled by cysteine 78. Residues arginine 106 and 135–136 each bind L-glutamine; that span reads IR. Active-site charge relay system residues include histidine 171 and glutamate 173.

It belongs to the glutaminase PdxT/SNO family. In the presence of PdxS, forms a dodecamer of heterodimers. Only shows activity in the heterodimer.

The enzyme catalyses aldehydo-D-ribose 5-phosphate + D-glyceraldehyde 3-phosphate + L-glutamine = pyridoxal 5'-phosphate + L-glutamate + phosphate + 3 H2O + H(+). It catalyses the reaction L-glutamine + H2O = L-glutamate + NH4(+). Its pathway is cofactor biosynthesis; pyridoxal 5'-phosphate biosynthesis. Functionally, catalyzes the hydrolysis of glutamine to glutamate and ammonia as part of the biosynthesis of pyridoxal 5'-phosphate. The resulting ammonia molecule is channeled to the active site of PdxS. This Kosmotoga olearia (strain ATCC BAA-1733 / DSM 21960 / TBF 19.5.1) protein is Pyridoxal 5'-phosphate synthase subunit PdxT.